Consider the following 1464-residue polypeptide: MSDKFKLLLKQIHFPQHEEAYNEIKSGSIESVKLFKSKRQWFFVFSFRNLLSYETFTLFDNLLHSSFDSLGAKVSYMINVEDISCDQSLLEAYFSYALDILKSSHFSIYSLFSNLGIEISNNSISVKAPAHILRENLHERFIALIADVLSNVGLSNVSISVLEDKEASSSLEEAYETNKISLQEEAESQARQALQSIVQSSPVPPPQKHQAQNFAEKQSQRVASFDKAEITPMIEVNSEENRIVFEGYIFDVEQRETKTGRIIINFKVTDYTSSFAMQRWVKDSEELVKFGMIKKGNWVRVRGRIENNPFTHSLTMNVQDIKEISHTPRKDLMPEGQKRVEFHAHTNMSTMDAIPTVEELIDTAAFWGHPAVAITDHANVQSFPHGYHKAKKAGIKAIFGLEANLVEDKVPIVYNSENLELKEATYVVFDVETTGLSAVHNDLIQIAASKMHKGNIVEQFDEFIDPGYPLSAFTTELTGITDNHVKGAKPLVQVLQEFQEFCKGAVLVAHNATFDVGFMNANYERHQLPTISQPVIDTLEFARNLYPEYKRHGLGPLTKRFGVALDHHHMANYDAEATGRLLFIFIKDVFEKHGLTNLEQLNTELVSDDSYKKSRVKHATLYVQNQTGLKNLFKLVSLSNVSYFEGVARIPRKVLDEYREGIIVGSACADGEVFDTLLSHGIDKAVEVAKYYDFIEVMPPAIYAPLIAKDLIKDEGAIEQLIKDLIEVANRLDKPVLATGNVHYINPEDAIYREIIVRALGQGAMINRPIGKGENAQPAPLPEAHFRTTNEMLDEFAFLGKDLAYEIVVANTQAMANQIEEVEVVKKDLYTPYIDRAEEQVAEMTYAKAFELYGNPLPDIIDLRIEKELSSILGNGFAVIYLASQMLVNRSNERGYLVGSRGSVGSSFVATMIGITEVNPMPPHYLCPKCQHSEFITDGSYGSGFDLPDKECSECGTEYKKDGQDIPFETFLGFDGDKVPDIDLNFSGDDQPSAHLDVRDIFGEQYAFRAGTVGTVADRTAYGFVKGYERDYNKFYRDAEVDRLAMGVAGVKRNTGQHPGGIVVIPNYMDVYDFTPVQYPADDVTAAWQTTHFNFHDIDENVLKLDILGHDDPTMIRKLQDLSGIDPKDIRADDPDVMKLFSGTEVLGVTPEQIGTSTGVLGIPEFGTNFVRGMVEETHPTTFAELLQLSGLSHGTDVWLGNAQDLIKEGIATLKTVIGCRDDIMVYLMHAGLDPKMAFTIMERVRKGMWLKISEEERNGYIQAMRENNVPDWYIESCGKIKYMFPKAHAAAYVMMALRVAYFKVHHPIYYYCAYFSIRAKAFELKTMSAGLDAVKARMEDIKEKRQRNEATNLENDLFTTLEIVNEMLERGFTFGQLDLYKSQATEFLIEGDTLIPPFIALEGLGENVAKQLVAAREEGEFLSKTELRKRGGLSSTLVERLDEMGILGNMPEDNQLSLFDDFF.

The region spanning 426-582 (YVVFDVETTG…YDAEATGRLL (157 aa)) is the Exonuclease domain.

Belongs to the DNA polymerase type-C family. PolC subfamily.

The protein localises to the cytoplasm. The catalysed reaction is DNA(n) + a 2'-deoxyribonucleoside 5'-triphosphate = DNA(n+1) + diphosphate. Required for replicative DNA synthesis. This DNA polymerase also exhibits 3' to 5' exonuclease activity. This Streptococcus thermophilus (strain ATCC BAA-491 / LMD-9) protein is DNA polymerase III PolC-type.